We begin with the raw amino-acid sequence, 25 residues long: Repetitive proline-rich cell wall protein (25 aa).

The interval 1–25 is disordered; it reads NYDKPPVEKPPVYKPPVEKPPVYKP. 4 tandem repeats follow at residues 5-9, 10-14, 15-19, and 20-24. The interval 5 to 24 is 4 X 5 AA tandem repeats of P-P-V-[EY]-K; the sequence is PPVEKPPVYKPPVEKPPVYK. 4-hydroxyproline is present on residues proline 6, proline 11, proline 16, and proline 21. Positions 8–25 are enriched in pro residues; the sequence is EKPPVYKPPVEKPPVYKP.

This sequence belongs to the plant proline-rich protein superfamily. ENOD12 family.

It localises to the secreted. Its subcellular location is the cell wall. The chain is Repetitive proline-rich cell wall protein from Phaseolus vulgaris (Kidney bean).